The primary structure comprises 411 residues: Putative polysaccharide ligase RC0486 (411 aa).

10 helical membrane passes run 15-35, 78-98, 101-121, 133-153, 166-186, 207-227, 233-253, 328-348, 361-381, and 383-403; these read LGML…LISF, GITM…IHLI, LATF…SNSA, LIFG…SNGF, MLDR…IILL, ISDS…FILT, IFFK…PVIA, ILQI…CLVY, NFKA…MISY, and IWQI…KLLV.

The protein belongs to the O-antigen ligase family.

The protein localises to the membrane. In Rickettsia conorii (strain ATCC VR-613 / Malish 7), this protein is Putative polysaccharide ligase RC0486.